Consider the following 878-residue polypeptide: Leucine--tRNA ligase (878 aa).

Positions 56–66 match the 'HIGH' region motif; that stretch reads PYPSGKLHMGH. Positions 630-634 match the 'KMSKS' region motif; sequence KMSKS. Residue lysine 633 coordinates ATP.

This sequence belongs to the class-I aminoacyl-tRNA synthetase family.

The protein resides in the cytoplasm. The enzyme catalyses tRNA(Leu) + L-leucine + ATP = L-leucyl-tRNA(Leu) + AMP + diphosphate. In Prochlorococcus marinus (strain MIT 9313), this protein is Leucine--tRNA ligase.